Here is a 439-residue protein sequence, read N- to C-terminus: uncharacterized protein (439 aa).

Residues 116 to 439 (GKAASYRAAQ…PMRTPLQEAE (324 aa)) form the YcaO domain.

This is an uncharacterized protein from Mycobacterium tuberculosis (strain CDC 1551 / Oshkosh).